We begin with the raw amino-acid sequence, 163 residues long: Protein MATERNALLY EXPRESSED GENE 5 (163 aa).

The 80-residue stretch at 38–117 (STLYIEGLPA…DDVNVSAPAE (80 aa)) folds into the RRM domain. 2 disulfide bridges follow: cysteine 140/cysteine 162 and cysteine 143/cysteine 151.

Belongs to the MEG family. Ubiquitous.

The protein is Protein MATERNALLY EXPRESSED GENE 5 (MEG5) of Zea mays (Maize).